The chain runs to 345 residues: MRWKRTIQLLDVHCEGEIGRVAIGGVPKIPGNTVAEQLHWLNTDPKGEELRRFLVLEPRGAPIGSVNLLLPARHPDADAAFIILQPDQAHASSGSNSICVTTALLESGIVEMKEPETVVTLETAAGLVRATATCRDGRCEKVRLTMVPSFVHELDVGIDTPQWGRIKLDLCYGGIFYALVDVGQIGLTIGKANAASLVQAGMVLKELINRTVPVVHPEIPAISGVAYVMFRDIDADGAIRTCTTMWPGRADRSPCGTGNSANLATLHARGKARVGDVFKSRSIIGSEFEVGLQAETEVAGKPAIIPTITGRGFTFGLSQVALDPFDPMANGFALTDVWGPLAGDI.

Q85 serves as a coordination point for substrate. The active-site Proton acceptor is S93. Substrate contacts are provided by residues G94–S95 and D251. Residue C255 is the Proton donor of the active site. G256–T257 contributes to the substrate binding site.

Belongs to the proline racemase family.

It carries out the reaction trans-4-hydroxy-L-proline = cis-4-hydroxy-D-proline. In terms of biological role, catalyzes the epimerization of trans-4-hydroxy-L-proline (t4LHyp) to cis-4-hydroxy-D-proline (c4DHyp). May be involved in a degradation pathway of t4LHyp. Can also catalyze the epimerization of trans-3-hydroxy-L-proline (t3LHyp) to cis-3-hydroxy-D-proline (c3DHyp) in vitro. Displays no proline racemase activity. This is 4-hydroxyproline 2-epimerase 1 from Rhizobium rhizogenes (strain K84 / ATCC BAA-868) (Agrobacterium radiobacter).